Consider the following 319-residue polypeptide: Acetyl-coenzyme A carboxylase carboxyl transferase subunit alpha (319 aa).

The CoA carboxyltransferase C-terminal domain occupies 35–296 (NIDEEVHRLR…KAQLLADLAD (262 aa)).

It belongs to the AccA family. As to quaternary structure, acetyl-CoA carboxylase is a heterohexamer composed of biotin carboxyl carrier protein (AccB), biotin carboxylase (AccC) and two subunits each of ACCase subunit alpha (AccA) and ACCase subunit beta (AccD).

The protein localises to the cytoplasm. It catalyses the reaction N(6)-carboxybiotinyl-L-lysyl-[protein] + acetyl-CoA = N(6)-biotinyl-L-lysyl-[protein] + malonyl-CoA. Its pathway is lipid metabolism; malonyl-CoA biosynthesis; malonyl-CoA from acetyl-CoA: step 1/1. Its function is as follows. Component of the acetyl coenzyme A carboxylase (ACC) complex. First, biotin carboxylase catalyzes the carboxylation of biotin on its carrier protein (BCCP) and then the CO(2) group is transferred by the carboxyltransferase to acetyl-CoA to form malonyl-CoA. In Klebsiella pneumoniae subsp. pneumoniae (strain ATCC 700721 / MGH 78578), this protein is Acetyl-coenzyme A carboxylase carboxyl transferase subunit alpha.